The sequence spans 434 residues: 3-phosphoshikimate 1-carboxyvinyltransferase (434 aa).

3-phosphoshikimate-binding residues include K22, S23, and R27. Phosphoenolpyruvate is bound at residue K22. 2 residues coordinate phosphoenolpyruvate: G93 and R121. 6 residues coordinate 3-phosphoshikimate: S168, S169, Q170, S199, D320, and K347. Position 170 (Q170) interacts with phosphoenolpyruvate. D320 acts as the Proton acceptor in catalysis. Phosphoenolpyruvate is bound by residues R351, R395, and K420.

This sequence belongs to the EPSP synthase family. Monomer.

It localises to the cytoplasm. It carries out the reaction 3-phosphoshikimate + phosphoenolpyruvate = 5-O-(1-carboxyvinyl)-3-phosphoshikimate + phosphate. Its pathway is metabolic intermediate biosynthesis; chorismate biosynthesis; chorismate from D-erythrose 4-phosphate and phosphoenolpyruvate: step 6/7. In terms of biological role, catalyzes the transfer of the enolpyruvyl moiety of phosphoenolpyruvate (PEP) to the 5-hydroxyl of shikimate-3-phosphate (S3P) to produce enolpyruvyl shikimate-3-phosphate and inorganic phosphate. In Cupriavidus taiwanensis (strain DSM 17343 / BCRC 17206 / CCUG 44338 / CIP 107171 / LMG 19424 / R1) (Ralstonia taiwanensis (strain LMG 19424)), this protein is 3-phosphoshikimate 1-carboxyvinyltransferase.